Consider the following 1034-residue polypeptide: Protein argonaute 2 (1034 aa).

The segment at 1-201 (MEHERGGGGR…PMRRPDGGGS (201 aa)) is disordered. Gly residues predominate over residues 18 to 125 (GGRGGGGGDG…ESGGGGGRGG (108 aa)). Over residues 172 to 187 (VVRVQPPAPPVAVSRS) the composition is skewed to low complexity. Residues 391-504 (PVLDLVQKSV…VPIELCDLLE (114 aa)) form the PAZ domain. Positions 688-989 (LLFCPMSDQH…AAYRGRLYYE (302 aa)) constitute a Piwi domain.

It belongs to the argonaute family. Ago subfamily.

In terms of biological role, probably involved in the RNA silencing pathway. May bind to short RNAs such as microRNAs (miRNAs) or short interfering RNAs (siRNAs), and represses the translation of mRNAs which are complementary to them. The protein is Protein argonaute 2 (AGO2) of Oryza sativa subsp. japonica (Rice).